Consider the following 110-residue polypeptide: Large ribosomal subunit protein uL23c (110 aa).

The protein belongs to the universal ribosomal protein uL23 family. As to quaternary structure, part of the 50S ribosomal subunit.

Its subcellular location is the plastid. The protein localises to the chloroplast. Functionally, binds to 23S rRNA. This is Large ribosomal subunit protein uL23c (rpl23) from Porphyra purpurea (Red seaweed).